A 284-amino-acid polypeptide reads, in one-letter code: 4-diphosphocytidyl-2-C-methyl-D-erythritol kinase (284 aa).

The active site involves Lys14. Position 98–108 (98–108) interacts with ATP; sequence PMGGGLGGGSS. Asp140 is an active-site residue.

This sequence belongs to the GHMP kinase family. IspE subfamily.

The catalysed reaction is 4-CDP-2-C-methyl-D-erythritol + ATP = 4-CDP-2-C-methyl-D-erythritol 2-phosphate + ADP + H(+). It functions in the pathway isoprenoid biosynthesis; isopentenyl diphosphate biosynthesis via DXP pathway; isopentenyl diphosphate from 1-deoxy-D-xylulose 5-phosphate: step 3/6. Functionally, catalyzes the phosphorylation of the position 2 hydroxy group of 4-diphosphocytidyl-2C-methyl-D-erythritol. In Shewanella baltica (strain OS223), this protein is 4-diphosphocytidyl-2-C-methyl-D-erythritol kinase.